The chain runs to 88 residues: Small ribosomal subunit protein uS17 (88 aa).

Belongs to the universal ribosomal protein uS17 family. Part of the 30S ribosomal subunit.

Its function is as follows. One of the primary rRNA binding proteins, it binds specifically to the 5'-end of 16S ribosomal RNA. The sequence is that of Small ribosomal subunit protein uS17 from Lactobacillus helveticus (strain DPC 4571).